A 256-amino-acid chain; its full sequence is uncharacterized protein (256 aa).

A run of 6 helical transmembrane segments spans residues 6 to 26 (TSFI…VSFL), 29 to 49 (LALV…GTFI), 61 to 81 (ISGT…GLYF), 145 to 165 (IIGC…TGIA), 175 to 195 (YYFK…IWLI), and 218 to 238 (IGWL…AIQF).

The protein belongs to the DedA family.

It localises to the cell membrane. This is an uncharacterized protein from Buchnera aphidicola subsp. Acyrthosiphon pisum (strain APS) (Acyrthosiphon pisum symbiotic bacterium).